The sequence spans 905 residues: Tight junction protein ZO-3 (905 aa).

Positions 11-93 (TATLYKDPRR…TANVTVKRPR (83 aa)) constitute a PDZ 1 domain. The segment at 92–167 (PRRVQLPATK…GGGSEANGLD (76 aa)) is disordered. Phosphoserine is present on residues serine 111 and serine 128. Low complexity predominate over residues 124–133 (GDSSSGSGRS). Over residues 139 to 155 (RRSRAGRRGRVGSHGRR) the composition is skewed to basic residues. A phosphoserine mark is found at serine 156, serine 157, serine 161, serine 195, and serine 311. The 78-residue stretch at 187–264 (SVLVKRRNSE…ELTLLVLRDS (78 aa)) folds into the PDZ 2 domain. The segment at 289 to 367 (LTSELSQAPP…QSLEDRGYSP (79 aa)) is disordered. Residue threonine 317 is modified to Phosphothreonine. A phosphoserine mark is found at serine 319, serine 343, and serine 359. Residues 368 to 434 (DTRVVSFPKG…LTREEAVQFL (67 aa)) form the PDZ 3 domain. The region spanning 464–541 (GDSFYIRTHF…PNQSRAEQLA (78 aa)) is the SH3 domain. The Guanylate kinase-like domain occupies 573–754 (RRGTKKASTQ…WYQEVKAVIQ (182 aa)). Serine 584 is modified (phosphoserine). Disordered regions lie at residues 773–818 (EDLD…PQDV) and 850–905 (TDKW…ATDL). The segment covering 851 to 877 (DKWETQADSHYTQDQRRQDSMRTYKHE) has biased composition (basic and acidic residues). Phosphoserine is present on residues serine 891 and serine 892.

It belongs to the MAGUK family. Interacts with occludin OCLN, claudins and TPJ1. Interacts with PATJ. Interacts with UBN1. Interacts with FASLG. Interacts with CCND1. Post-translationally, phosphorylated. As to expression, is concentrated in various types of epithelium, in tissues such as the lung, liver and kidney, but not in endothelium or at cadherin-based cell-cell adhesion sites.

The protein resides in the cell membrane. The protein localises to the cell junction. It is found in the tight junction. Its subcellular location is the nucleus. Functionally, tjp1, Tjp2, and Tjp3 are closely related scaffolding proteins that link tight junction (TJ) transmembrane proteins such as claudins, junctional adhesion molecules, and occludin to the actin cytoskeleton. The tight junction acts to limit movement of substances through the paracellular space and as a boundary between the compositionally distinct apical and basolateral plasma membrane domains of epithelial and endothelial cells. Binds and recruits PatJ to tight junctions where it connects and stabilizes apical and lateral components of tight junctions. Promotes cell-cycle progression through the sequestration of cyclin D1 (Ccnd1) at tight junctions during mitosis which prevents Ccnd1 degradation during M-phase and enables S-phase transition. With Tjp1 and Tjp2, participates in the junctional retention and stability of the transcription factor DbpA, but is not involved in its shuttling to the nucleus. Contrary to Tjp2, Tjp3 is dispensable for individual viability, embryonic development, epithelial differentiation, and the establishment of TJs, at least in the laboratory environment. The polypeptide is Tight junction protein ZO-3 (Tjp3) (Mus musculus (Mouse)).